The following is a 71-amino-acid chain: Long neurotoxin 1 (71 aa).

Cystine bridges form between cysteine 3/cysteine 20, cysteine 14/cysteine 41, cysteine 26/cysteine 30, cysteine 45/cysteine 56, and cysteine 57/cysteine 62.

The protein belongs to the three-finger toxin family. Long-chain subfamily. Type II alpha-neurotoxin sub-subfamily. In terms of tissue distribution, expressed by the venom gland.

The protein resides in the secreted. In terms of biological role, binds with high affinity to muscular (alpha-1/CHRNA1) and neuronal (alpha-7/CHRNA7) nicotinic acetylcholine receptor (nAChR) and hinders acetylcholine binding to the receptor, thereby impairing neuromuscular and neuronal transmission. This chain is Long neurotoxin 1, found in Naja annulata annulata (Banded water cobra).